The following is a 208-amino-acid chain: Uracil phosphoribosyltransferase (208 aa).

5-phospho-alpha-D-ribose 1-diphosphate contacts are provided by residues R78, R103, and D130–T138. Residues I193 and G198–A200 each bind uracil. Position 199 (D199) interacts with 5-phospho-alpha-D-ribose 1-diphosphate.

It belongs to the UPRTase family. Mg(2+) serves as cofactor.

The catalysed reaction is UMP + diphosphate = 5-phospho-alpha-D-ribose 1-diphosphate + uracil. It functions in the pathway pyrimidine metabolism; UMP biosynthesis via salvage pathway; UMP from uracil: step 1/1. With respect to regulation, allosterically activated by GTP. In terms of biological role, catalyzes the conversion of uracil and 5-phospho-alpha-D-ribose 1-diphosphate (PRPP) to UMP and diphosphate. The chain is Uracil phosphoribosyltransferase from Campylobacter jejuni subsp. jejuni serotype O:6 (strain 81116 / NCTC 11828).